We begin with the raw amino-acid sequence, 79 residues long: Cytochrome c oxidase subunit 7A1, mitochondrial (79 aa).

A mitochondrion-targeting transit peptide spans 1–21 (MQALRVSQALIRSFSSTARNR). Residues 22 to 46 (FQNRVREKQKLFQEDNDIPLYLKGG) lie on the Mitochondrial matrix side of the membrane. A helical membrane pass occupies residues 47–75 (IVDNILYRVTMTLCLGGTVYSLYSLGWAS). Residues 76 to 79 (FPRN) are Mitochondrial intermembrane-facing.

It belongs to the cytochrome c oxidase VIIa family. Component of the complex IV (CIV, cytochrome c oxidase), a multisubunit enzyme composed of 14 subunits. The complex is composed of a catalytic core of 3 subunits MT-CO1, MT-CO2 and MT-CO3, encoded in the mitochondrial DNA, and 11 supernumerary subunits COX4I1 (or COX4I2), COX5A, COX5B, COX6A2 (or COX6A1), COX6B1 (or COX6B2), COX6C, COX7A1 (or COX7A2), COX7B, COX7C, COX8B and NDUFA4, which are encoded in the nuclear genome. The complex exists as a monomer or a dimer and forms supercomplexes (SCs) in the inner mitochondrial membrane with NADH-ubiquinone oxidoreductase (complex I, CI) and ubiquinol-cytochrome c oxidoreductase (cytochrome b-c1 complex, complex III, CIII), resulting in different assemblies (supercomplex SCI(1)III(2)IV(1) and megacomplex MCI(2)III(2)IV(2)).

It localises to the mitochondrion inner membrane. It participates in energy metabolism; oxidative phosphorylation. In terms of biological role, component of the mitochondrial respiratory complex IV (CIV, also named cytochrome c oxidase complex), the last enzyme in the mitochondrial electron transport chain which drives oxidative phosphorylation. The CIV complex is the component of the respiratory chain that catalyzes the reduction of oxygen to water. Acts as an assembly factor that specifically drives the homodimerization of CIV complexes, mediating the formation of mitochondrial respiratory supercomplexes (respirasomes) containing two CIV: supercomplxes with two molecules of CIV show improved activity. Despite being highly expressed in brown adipose tissue, not required for thermogenesis. The polypeptide is Cytochrome c oxidase subunit 7A1, mitochondrial (COX7A1) (Homo sapiens (Human)).